Reading from the N-terminus, the 2227-residue chain is Genome polyprotein (2227 aa).

2 consecutive short sequence motifs ((L)YPX(n)L motif) follow at residues 167 to 171 and 200 to 205; these read YPHGL and YPVWEL. Positions 766–836 are involved in P1-2A pentamerization; it reads MMSRIAAGDL…PRKMKGLFSQ (71 aa). A helical transmembrane segment spans residues 1011–1031; sequence TVEIINTVLCFVKSGILLYVI. Positions 1043-1070 are membrane-penetrating ability; sequence IGLLRVMNYADIGCSVISCGKVFSKMLE. A coiled-coil region spans residues 1127-1152; the sequence is KKKDILNILKDNQQKIEKAIEEADNF. The region spanning 1204–1366 is the SF3 helicase domain; the sequence is HQKLKNLGSI…SFFKNPHNDM (163 aa). 1230–1237 lines the ATP pocket; the sequence is GKRGGGKS. The chain crosses the membrane as a helical span at residues 1462–1482; sequence WVAVGAAVGILGVLVGGWFVY. Tyr1499 is modified (O-(5'-phospho-RNA)-tyrosine). Residues 1514 to 1728 enclose the Peptidase C3 domain; the sequence is DPVESQSTLE…VAKLVTQEMF (215 aa). Catalysis depends on for protease 3C activity residues His1563, Asp1603, and Cys1691. The RdRp catalytic domain maps to 1976-2097; the sequence is DVGLDLDFSA…VFSRDVQIDN (122 aa).

It belongs to the picornaviridae polyprotein family. In terms of assembly, homodimer. Homomultimer; probably interacts with membranes in a multimeric form. Seems to assemble into amyloid-like fibers. As to quaternary structure, homodimer. Monomer. Interacts with protein 3CD. Interacts with host ACBD3. In terms of assembly, interacts with protein 3AB. As to quaternary structure, interacts with human MAVS. Homodimer; disulfide-linked. In terms of assembly, homopentamer. Homooligomer. As to quaternary structure, interacts with capsid protein VP2. Interacts with capsid protein VP3. Interacts with capsid protein VP1. Interacts with capsid protein VP3. In terms of assembly, interacts with capsid protein VP1. Interacts with capsid protein VP2. In terms of processing, specific enzymatic cleavages by viral protease in vivo yield a variety of precursors and mature proteins. Polyprotein processing intermediates are produced, such as P1-2A which is a functional precursor of the structural proteins, VP0 which is a VP4-VP2 precursor, VP1-2A precursor, 3ABC precursor which is a stable and catalytically active precursor of 3A, 3B and 3C proteins, 3AB and 3CD precursors. The assembly signal 2A is removed from VP1-2A by a host protease, possibly host Cathepsin L. This cleavage occurs over a region of 3 amino-acids probably generating VP1 proteins with heterogeneous C-termini. During virion maturation, immature virions are rendered infectious following cleavage of VP0 into VP4 and VP2. This maturation seems to be an autocatalytic event triggered by the presence of RNA in the capsid and is followed by a conformational change of the particle. Post-translationally, the assembly signal 2A is removed from VP1-2A by a host protease, possibly host Cathepsin L in naked virions. This cleavage does not occur in enveloped virions. This cleavage occurs over a region of 3 amino-acids probably generating VP1 proteins with heterogeneous C-termini. In terms of processing, VPg is uridylylated prior to priming replication into VPg-pUpU. Unlike other picornaviruses, does not seem to be myristoylated.

Its subcellular location is the virion. The protein resides in the host endosome. It localises to the host multivesicular body. The protein localises to the host membrane. It is found in the host mitochondrion outer membrane. Its subcellular location is the host cytoplasm. The protein resides in the host cytoplasmic vesicle membrane. It catalyses the reaction RNA(n) + a ribonucleoside 5'-triphosphate = RNA(n+1) + diphosphate. The catalysed reaction is a ribonucleoside 5'-triphosphate + H2O = a ribonucleoside 5'-diphosphate + phosphate + H(+). It carries out the reaction Selective cleavage of Gln-|-Gly bond in the poliovirus polyprotein. In other picornavirus reactions Glu may be substituted for Gln, and Ser or Thr for Gly.. Functionally, capsid proteins VP1, VP2, and VP3 form a closed capsid enclosing the viral positive strand RNA genome. All these proteins contain a beta-sheet structure called beta-barrel jelly roll. Together they form an icosahedral capsid (T=3) composed of 60 copies of each VP1, VP2, and VP3, with a diameter of approximately 300 Angstroms. VP1 is situated at the 12 fivefold axes, whereas VP2 and VP3 are located at the quasi-sixfold axes. The naked capsid interacts with the host receptor HAVCR1 to provide virion attachment to and probably entry into the target cell. Its function is as follows. VP0 precursor is a component of the immature procapsids. Plays a role in the assembly of the 12 pentamers into an icosahedral structure. Has not been detected in mature virions, supposedly owing to its small size. In terms of biological role, precursor component of immature procapsids that corresponds to an extended form of the structural protein VP1. After maturation, possibly by the host Cathepsin L, the assembly signal 2A is cleaved to give rise to the mature VP1 protein. Functionally, functions as a viroporin. Affects membrane integrity and causes an increase in membrane permeability. Involved in host intracellular membrane rearrangements probably to give rise to the viral factories. Does not disrupt calcium homeostasis or glycoprotein trafficking. Antagonizes the innate immune response of the host by suppressing IFN-beta synthesis, which it achieves by interfering with the RIG-I/IFIH1 pathway. Its function is as follows. Affects membrane integrity and causes an increase in membrane permeability. Associates with and induces structural rearrangements of intracellular membranes. Displays RNA-binding activity. In terms of biological role, the precursor 3ABC is targeted to the mitochondrial membrane where protease 3C activity cleaves and inhibits the host antiviral protein MAVS, thereby disrupting activation of IRF3 through the IFIH1/MDA5 pathway. In vivo, the protease activity of 3ABC precursor is more efficient in cleaving the 2BC precursor than that of protein 3C. The 3ABC precursor may therefore play a role in the proteolytic processing of the polyprotein. Possible viroporin. Functionally, interacts with the 3CD precursor and with RNA structures found at both the 5'- and 3'-termini of the viral genome. Since the 3AB precursor contains the hydrophobic domain 3A, it probably anchors the whole viral replicase complex to intracellular membranes on which viral RNA synthesis occurs. Its function is as follows. May serve as membrane anchor to the 3AB and 3ABC precursors via its hydrophobic domain. May interact with RNA. Acts as a primer for viral RNA replication and remains covalently bound to viral genomic RNA. VPg is uridylylated prior to priming replication into VPg-pUpU. The VPg-pUpU is then used as primer on the genomic RNA poly(A) by the RNA-dependent RNA polymerase to replicate the viral genome. In terms of biological role, cysteine protease that generates mature viral proteins from the precursor polyprotein. In addition to its proteolytic activity, it binds to viral RNA, and thus influences viral genome replication. RNA and substrate bind cooperatively to the protease. Cleaves IKBKG/NEMO to impair innate immune signaling. Cleaves host PABPC1 which may participate in the switch of viral translation to RNA synthesis. Functionally, interacts with the 3AB precursor and with RNA structures found at both the 5'- and 3'-termini of the viral genome. Disrupts TLR3 signaling by degrading the host adapter protein TICAM1/TRIF. Its function is as follows. RNA-directed RNA polymerase 3D-POL replicates genomic and antigenomic RNA by recognizing replications specific signals. The protein is Genome polyprotein of Human hepatitis A virus genotype IA (isolate H2) (HHAV).